The chain runs to 601 residues: Glutathione-regulated potassium-efflux system protein KefB (601 aa).

The next 13 membrane-spanning stretches (helical) occupy residues 4-24 (ADLL…VPLA), 29-49 (IGAV…GLGF), 55-75 (EILH…GLEL), 87-107 (IFGV…GLLM), 111-131 (FLWQ…TAMA), 152-172 (VLLF…LLAG), 177-197 (HFDW…LIGG), 207-227 (FIAA…LVLS), 230-250 (LFMD…GVLL), 262-282 (AIDP…GMSL), 284-304 (LGVL…LVVI), 324-344 (MQFA…FSTA), and 356-376 (ALLL…MKGI). The RCK N-terminal domain maps to 400 to 519 (KPQVIVVGFG…AGVTQFSRET (120 aa)).

The protein belongs to the monovalent cation:proton antiporter 2 (CPA2) transporter (TC 2.A.37) family. KefB subfamily. As to quaternary structure, interacts with the regulatory subunit KefG.

It localises to the cell inner membrane. Its function is as follows. Pore-forming subunit of a potassium efflux system that confers protection against electrophiles. Catalyzes K(+)/H(+) antiport. This is Glutathione-regulated potassium-efflux system protein KefB from Salmonella paratyphi C (strain RKS4594).